A 533-amino-acid chain; its full sequence is Acyl-CoA-binding domain-containing protein 5 (533 aa).

The ACB domain maps to 42-131 (HETRFEAAVK…MKKILETMPM (90 aa)). An acyl-CoA is bound by residues 53 to 62 (IQSLPKNGSF), 73 to 77 (YSFYK), lysine 99, and tyrosine 118. The interval 182 to 227 (TPNAKTVNGKAESSDSGAESEEEAAQEDPKRPEPRDSDKKMMKKSA) is disordered. Phosphoserine is present on residues serine 194, serine 195, serine 197, and serine 201. Residues 208-227 (EDPKRPEPRDSDKKMMKKSA) show a composition bias toward basic and acidic residues. Residues serine 244 and serine 314 each carry the phosphoserine modification. The segment at 339-443 (GGNPSQPLES…ERWGSDRGSR (105 aa)) is disordered. Residues 374 to 383 (GKGEVKRGGE) show a composition bias toward basic and acidic residues. At serine 429 the chain carries Phosphoserine. Basic and acidic residues predominate over residues 432–442 (DGERWGSDRGS). Residues 448–478 (EQIALVLMRLQEDMQNVLQRLHKLEMLAASQ) are a coiled coil. An N6-acetyllysine modification is found at lysine 470. Residues 503-525 (SPGALTFAIIWPFIAQWLVHLYY) traverse the membrane as a helical segment.

Belongs to the ATG37 family. In terms of tissue distribution, highly expressed in brain and liver. Lower levels of expression in spleen and heart.

The protein resides in the peroxisome membrane. Functionally, acyl-CoA binding protein which acts as the peroxisome receptor for pexophagy but is dispensable for aggrephagy and nonselective autophagy. Binds medium- and long-chain acyl-CoA esters. The chain is Acyl-CoA-binding domain-containing protein 5 (ACBD5) from Bos taurus (Bovine).